The chain runs to 368 residues: Glycolate oxidase 3 (368 aa).

Residue methionine 1 is modified to N-acetylmethionine. The 359-residue stretch at 1–359 (MEITNVMEYE…SRTHIKTDWD (359 aa)) folds into the FMN hydroxy acid dehydrogenase domain. Tyrosine 24 contacts glyoxylate. FMN-binding positions include 77–79 (PTA), serine 106, 127–129 (QLY), and threonine 155. Tyrosine 129 provides a ligand contact to glyoxylate. Arginine 164 serves as a coordination point for glyoxylate. FMN contacts are provided by lysine 230 and serine 252. Histidine 254 and arginine 257 together coordinate glyoxylate. Catalysis depends on histidine 254, which acts as the Proton acceptor. FMN-binding positions include 285–289 (DGGVR) and 308–309 (GR).

The protein belongs to the FMN-dependent alpha-hydroxy acid dehydrogenase family. In terms of assembly, homotetramer. The cofactor is FMN.

The protein localises to the peroxisome. The enzyme catalyses glycolate + O2 = glyoxylate + H2O2. It participates in photosynthesis; photorespiration; glycine from 2-phosphoglycolate: step 2/3. Catalyzes the oxidation of glycolate to glyoxylate, with a reduction of O2 to H2O2. Is a key enzyme in photorespiration in green plants. The protein is Glycolate oxidase 3 (GLO5) of Arabidopsis thaliana (Mouse-ear cress).